Reading from the N-terminus, the 61-residue chain is Small ribosomal subunit protein uS14 (61 aa).

C24, C27, C40, and C43 together coordinate Zn(2+).

Belongs to the universal ribosomal protein uS14 family. Zinc-binding uS14 subfamily. In terms of assembly, part of the 30S ribosomal subunit. Contacts proteins S3 and S10. Zn(2+) serves as cofactor.

In terms of biological role, binds 16S rRNA, required for the assembly of 30S particles and may also be responsible for determining the conformation of the 16S rRNA at the A site. This chain is Small ribosomal subunit protein uS14, found in Ureaplasma parvum serovar 3 (strain ATCC 27815 / 27 / NCTC 11736).